The following is a 284-amino-acid chain: Bifunctional protein FolD 1 (284 aa).

Residues 166 to 168 (GAS) and Ile-232 contribute to the NADP(+) site.

Belongs to the tetrahydrofolate dehydrogenase/cyclohydrolase family. As to quaternary structure, homodimer.

It catalyses the reaction (6R)-5,10-methylene-5,6,7,8-tetrahydrofolate + NADP(+) = (6R)-5,10-methenyltetrahydrofolate + NADPH. The catalysed reaction is (6R)-5,10-methenyltetrahydrofolate + H2O = (6R)-10-formyltetrahydrofolate + H(+). The protein operates within one-carbon metabolism; tetrahydrofolate interconversion. In terms of biological role, catalyzes the oxidation of 5,10-methylenetetrahydrofolate to 5,10-methenyltetrahydrofolate and then the hydrolysis of 5,10-methenyltetrahydrofolate to 10-formyltetrahydrofolate. This is Bifunctional protein FolD 1 from Pseudomonas syringae pv. tomato (strain ATCC BAA-871 / DC3000).